The primary structure comprises 931 residues: Adhesion G protein-coupled receptor E1 (931 aa).

Positions 1-27 are cleaved as a signal peptide; sequence MWGFWLLLFWGFSGMYRWGMTTLPTLG. At 28-644 the chain is on the extracellular side; that stretch reads QTLGGVNECQ…IMASGELTME (617 aa). 2 consecutive EGF-like domains span residues 32-80 and 81-132; these read GVNE…VECQ and DVNE…FLCA. Intrachain disulfides connect C36-C48, C42-C57, C59-C79, C85-C98, C92-C107, C109-C131, C137-C149, C143-C158, C160-C171, C177-C189, C183-C198, C200-C220, C226-C239, C233-C248, C250-C270, C276-C286, C280-C295, C297-C317, C323-C336, C330-C345, and C347-C366. An EGF-like 3; calcium-binding domain is found at 133-172; sequence DVDECLTIGICPKYSNCSNSVGSYSCTCQPGFVLNGSICE. N-linked (GlcNAc...) asparagine glycans are attached at residues N148 and N167. One can recognise an EGF-like 4; calcium-binding domain in the interval 173–221; it reads DEDECVTRDVCPEHATCHNTLGSYYCTCNSGLESSGGGPMFQGLDESCE. The 50-residue stretch at 222–271 folds into the EGF-like 5; calcium-binding domain; that stretch reads DVDECSRNSTLCGPTFICINTLGSYSCSCPAGFSLPTFQILGHPADGNCT. N229 is a glycosylation site (N-linked (GlcNAc...) asparagine). N269 and N283 each carry an N-linked (GlcNAc...) asparagine glycan. Positions 272-318 constitute an EGF-like 6; calcium-binding domain; that stretch reads DIDECDDTCPLNSSCTNTIGSYFCTCHPGFASSNGQLNFKDLEVTCE. One can recognise an EGF-like 7; calcium-binding domain in the interval 319-367; that stretch reads DIDECTQDPLQCGLNSVCTNVPGSYICGCLPDFQMDPEGSQGYGNFNCK. N-linked (GlcNAc...) asparagine glycosylation is found at N405, N417, N474, and N498. One can recognise a GAIN-B domain in the interval 482 to 642; that stretch reads EYLDIESKVI…AIIMASGELT (161 aa). Residues 506 to 508 carry the Cell attachment site motif; the sequence is RGD. 2 disulfides stabilise this stretch: C595–C624 and C612–C626. Residues 595–642 are GPS; sequence CVSWNTDVEDGRWTPSGCEIVEASETHTVCSCNRMANLAIIMASGELT. Residues 645-672 traverse the membrane as a helical segment; sequence FSLYIISHVGTVISLVCLALAIATFLLC. Residues 673–679 lie on the Cytoplasmic side of the membrane; the sequence is RAVQNHN. A helical membrane pass occupies residues 680–701; that stretch reads TYMHLHLCVCLFLAKILFLTGI. Residues 702–711 lie on the Extracellular side of the membrane; that stretch reads DKTDNQTACA. N706 carries N-linked (GlcNAc...) asparagine glycosylation. A helical transmembrane segment spans residues 712–735; the sequence is IIAGFLHYLFLACFFWMLVEAVML. The Cytoplasmic portion of the chain corresponds to 736–754; the sequence is FLMVRNLKVVNYFSSRNIK. Residues 755-776 traverse the membrane as a helical segment; it reads MLHLCAFGYGLPVLVVIISASV. The Extracellular portion of the chain corresponds to 777–792; sequence QPRGYGMHNRCWLNTE. Residues 793–821 form a helical membrane-spanning segment; the sequence is TGFIWSFLGPVCMIITINSVLLAWTLWVL. Residues 822–839 lie on the Cytoplasmic side of the membrane; sequence RQKLCSVSSEVSKLKDTR. Residues 840-859 form a helical membrane-spanning segment; it reads LLTFKAIAQIFILGCSWVLG. At 860-874 the chain is on the extracellular side; sequence IFQIGPLASIMAYLF. The helical transmembrane segment at 875 to 897 threads the bilayer; sequence TIINSLQGAFIFLIHCLLNRQVR. Topologically, residues 898-931 are cytoplasmic; sequence DEYKKLLTRKTDLSSHSQTSGILLSSMPSTSKMG.

It belongs to the G-protein coupled receptor 2 family. Adhesion G-protein coupled receptor (ADGR) subfamily. In terms of tissue distribution, in macrophages; but absent from those which are localized within T-cell areas of lymph nodes and spleen. Low level of expression on blood monocytes.

The protein localises to the cell membrane. In terms of biological role, orphan receptor involved in cell adhesion and probably in cell-cell interactions specifically involving cells of the immune system. May play a role in regulatory T-cells (Treg) development. The sequence is that of Adhesion G protein-coupled receptor E1 (Adgre1) from Mus musculus (Mouse).